The chain runs to 302 residues: D-alanine--D-alanine ligase B (302 aa).

One can recognise an ATP-grasp domain in the interval 99 to 294 (KKVLKAENIR…YSKFIDLIIE (196 aa)). An ATP-binding site is contributed by 126-181 (IEEIGYPVFVKPNNGGSSVATFKVYKKEDIKNSVMEGLKYDEEVIIESFIKGREIT). Residues aspartate 248, glutamate 261, and asparagine 263 each coordinate Mg(2+).

Belongs to the D-alanine--D-alanine ligase family. Mg(2+) is required as a cofactor. Mn(2+) serves as cofactor.

The protein resides in the cytoplasm. The enzyme catalyses 2 D-alanine + ATP = D-alanyl-D-alanine + ADP + phosphate + H(+). It participates in cell wall biogenesis; peptidoglycan biosynthesis. Cell wall formation. The chain is D-alanine--D-alanine ligase B from Clostridium perfringens (strain 13 / Type A).